A 75-amino-acid polypeptide reads, in one-letter code: Small ribosomal subunit protein bS18 (75 aa).

This sequence belongs to the bacterial ribosomal protein bS18 family. Part of the 30S ribosomal subunit. Forms a tight heterodimer with protein bS6.

Binds as a heterodimer with protein bS6 to the central domain of the 16S rRNA, where it helps stabilize the platform of the 30S subunit. This is Small ribosomal subunit protein bS18 from Sodalis glossinidius (strain morsitans).